The chain runs to 186 residues: ATP synthase subunit delta, chloroplastic (186 aa).

The protein belongs to the ATPase delta chain family. F-type ATPases have 2 components, F(1) - the catalytic core - and F(0) - the membrane proton channel. F(1) has five subunits: alpha(3), beta(3), gamma(1), delta(1), epsilon(1). CF(0) has four main subunits: a(1), b(1), b'(1) and c(10-14). The alpha and beta chains form an alternating ring which encloses part of the gamma chain. F(1) is attached to F(0) by a central stalk formed by the gamma and epsilon chains, while a peripheral stalk is formed by the delta, b and b' chains.

It is found in the plastid. The protein resides in the chloroplast thylakoid membrane. F(1)F(0) ATP synthase produces ATP from ADP in the presence of a proton or sodium gradient. F-type ATPases consist of two structural domains, F(1) containing the extramembraneous catalytic core and F(0) containing the membrane proton channel, linked together by a central stalk and a peripheral stalk. During catalysis, ATP synthesis in the catalytic domain of F(1) is coupled via a rotary mechanism of the central stalk subunits to proton translocation. Its function is as follows. This protein is part of the stalk that links CF(0) to CF(1). It either transmits conformational changes from CF(0) to CF(1) or is implicated in proton conduction. In Porphyra purpurea (Red seaweed), this protein is ATP synthase subunit delta, chloroplastic.